Here is a 560-residue protein sequence, read N- to C-terminus: Protein yellow (560 aa).

A signal peptide spans 1–30; that stretch reads MHVQDKGGIGALTALSLLLVAVTMVTPTQA. Residues Asn-153 and Asn-224 are each glycosylated (N-linked (GlcNAc...) asparagine). Positions 452 to 492 are disordered; that stretch reads QYRPVLPQKPQTSWGPSPPSRSYLPSLGASPGGPGQVVSSV. Residues 471-480 show a composition bias toward low complexity; that stretch reads SRSYLPSLGA.

It belongs to the major royal jelly protein family.

The protein localises to the secreted. Its function is as follows. Controls the pigmentation pattern of the adult cuticle and larval mouth parts. The protein is Protein yellow (y) of Drosophila pseudoobscura pseudoobscura (Fruit fly).